An 840-amino-acid polypeptide reads, in one-letter code: Serotype-specific mannosyltransferase WbdA (840 aa).

The segment at 2-399 (HILIDVQGYQ…WANTAHLAIE (398 aa)) is alpha-(1-&gt;2)-mannosyltransferase. The interval 456 to 829 (KLLVDISVLA…WKQSAEFLLK (374 aa)) is alpha-(1-&gt;3)-mannosyltransferase.

It belongs to the glycosyltransferase group 1 family. Glycosyltransferase 4 subfamily. Monomer. Interacts with the C-terminal region of WbdD. Interacts with WbdD via a surface-exposed alpha-helix in the C-terminal mannosyltransferase domain. However, the C-terminal domain is unable to interact with WbdD in the absence of its N-terminal partner.

The protein resides in the cell inner membrane. It carries out the reaction [alpha-D-Man-(1-&gt;3)-alpha-D-Man-(1-&gt;3)-alpha-D-Man-(1-&gt;2)-alpha-D-Man-(1-&gt;2)](n)-alpha-D-Man-(1-&gt;3)-alpha-D-Man-(1-&gt;3)-alpha-D-Man-(1-&gt;3)-alpha-D-GlcNAc-di-trans,octa-cis-undecaprenyl diphosphate + 2 GDP-alpha-D-mannose = alpha-D-Man-(1-&gt;2)-alpha-D-Man-(1-&gt;2)-[alpha-D-Man-(1-&gt;3)-alpha-D-Man-(1-&gt;3)-alpha-D-Man-(1-&gt;2)-alpha-D-Man-(1-&gt;2)](n)-alpha-D-Man-(1-&gt;3)-alpha-D-Man-(1-&gt;3)-alpha-D-Man-(1-&gt;3)-alpha-D-GlcNAc-di-trans,octa-cis-undecaprenyl diphosphate + 2 GDP + 2 H(+). The catalysed reaction is alpha-D-Man-(1-&gt;2)-alpha-D-Man-(1-&gt;2)-[alpha-D-Man-(1-&gt;3)-alpha-D-Man-(1-&gt;3)-alpha-D-Man-(1-&gt;2)-alpha-D-Man-(1-&gt;2)](n)-alpha-D-Man-(1-&gt;3)-alpha-D-Man-(1-&gt;3)-alpha-D-Man-(1-&gt;3)-alpha-D-GlcNAc-di-trans,octa-cis-undecaprenyl diphosphate + 2 GDP-alpha-D-mannose = [alpha-D-Man-(1-&gt;3)-alpha-D-Man-(1-&gt;3)-alpha-D-Man-(1-&gt;2)-alpha-D-Man-(1-&gt;2)](n+1)-alpha-D-Man-(1-&gt;3)-alpha-D-Man-(1-&gt;3)-alpha-D-Man-(1-&gt;3)-alpha-D-GlcNAc-di-trans,octa-cis-undecaprenyl diphosphate + 2 GDP + 2 H(+). It participates in bacterial outer membrane biogenesis; LPS O-antigen biosynthesis. The alpha-(1-&gt;2)-mannosyltransferase activity of the N-terminal domain is regulated by the activity of the C-terminal alpha-(1-&gt;3)-mannosyltransferase. The relative concentration of WbdA and WbdD is critical in determining the O polysaccharide (OPS) modal chain length. OPS chain length increases with increasing concentration of WbdA, but the maximum length does not increase beyond the wild-type modal length, despite substantial increases in WbdA concentration. Functionally, mannosyltransferase involved in the biosynthesis of the repeat unit of the lipopolysaccharide (LPS) O-antigen region. Catalyzes the polymerization of a tetrasaccharide repeat unit containing two alpha-(1-&gt;3)- and two alpha-(1-&gt;2)-linked mannopyranose residues. Extension is terminated by the action of the chain terminator bifunctional methyltransferase/kinase WbdD. This Escherichia coli protein is Serotype-specific mannosyltransferase WbdA.